The following is a 549-amino-acid chain: DNA mismatch repair protein MutL (549 aa).

It belongs to the DNA mismatch repair MutL/HexB family.

This protein is involved in the repair of mismatches in DNA. It is required for dam-dependent methyl-directed DNA mismatch repair. May act as a 'molecular matchmaker', a protein that promotes the formation of a stable complex between two or more DNA-binding proteins in an ATP-dependent manner without itself being part of a final effector complex. The polypeptide is DNA mismatch repair protein MutL (Pseudothermotoga lettingae (strain ATCC BAA-301 / DSM 14385 / NBRC 107922 / TMO) (Thermotoga lettingae)).